Here is a 670-residue protein sequence, read N- to C-terminus: tRNA 5-methylaminomethyl-2-thiouridine biosynthesis bifunctional protein MnmC (670 aa).

The tract at residues 1–242 is tRNA (mnm(5)s(2)U34)-methyltransferase; it reads MTFSVQHAEI…KRECLSGLKI (242 aa). The tract at residues 269–670 is FAD-dependent cmnm(5)s(2)U34 oxidoreductase; the sequence is IGGGIASFCA…KKWLKGSKVE (402 aa).

This sequence in the N-terminal section; belongs to the methyltransferase superfamily. tRNA (mnm(5)s(2)U34)-methyltransferase family. It in the C-terminal section; belongs to the DAO family. It depends on FAD as a cofactor.

It is found in the cytoplasm. The enzyme catalyses 5-aminomethyl-2-thiouridine(34) in tRNA + S-adenosyl-L-methionine = 5-methylaminomethyl-2-thiouridine(34) in tRNA + S-adenosyl-L-homocysteine + H(+). Functionally, catalyzes the last two steps in the biosynthesis of 5-methylaminomethyl-2-thiouridine (mnm(5)s(2)U) at the wobble position (U34) in tRNA. Catalyzes the FAD-dependent demodification of cmnm(5)s(2)U34 to nm(5)s(2)U34, followed by the transfer of a methyl group from S-adenosyl-L-methionine to nm(5)s(2)U34, to form mnm(5)s(2)U34. The protein is tRNA 5-methylaminomethyl-2-thiouridine biosynthesis bifunctional protein MnmC of Haemophilus influenzae (strain 86-028NP).